A 97-amino-acid chain; its full sequence is Co-chaperonin GroES (97 aa).

This sequence belongs to the GroES chaperonin family. Heptamer of 7 subunits arranged in a ring. Interacts with the chaperonin GroEL.

Its subcellular location is the cytoplasm. Its function is as follows. Together with the chaperonin GroEL, plays an essential role in assisting protein folding. The GroEL-GroES system forms a nano-cage that allows encapsulation of the non-native substrate proteins and provides a physical environment optimized to promote and accelerate protein folding. GroES binds to the apical surface of the GroEL ring, thereby capping the opening of the GroEL channel. The sequence is that of Co-chaperonin GroES from Stutzerimonas stutzeri (Pseudomonas stutzeri).